The primary structure comprises 84 residues: Beta/gamma-crystallin (84 aa).

Beta/gamma crystallin 'Greek key' domains lie at 2-42 (GKII…IVES) and 43-84 (GTWF…VKQQ). The tract at residues 64 to 84 (KYPNPGSWGGNDDELSSVKQQ) is disordered.

The protein belongs to the beta/gamma-crystallin family. Monomer. In terms of tissue distribution, palps of larvae and otolith of the light-sensing ocellus.

In terms of biological role, structural component of the neuroectodermal visual system. The chain is Beta/gamma-crystallin from Ciona intestinalis (Transparent sea squirt).